The sequence spans 369 residues: Oleoyl-acyl carrier protein thioesterase, chloroplastic (369 aa).

Active-site residues include asparagine 262, histidine 264, and cysteine 299.

This sequence belongs to the acyl-ACP thioesterase family.

The protein localises to the plastid. Its subcellular location is the chloroplast. The enzyme catalyses (9Z)-octadecenoyl-[ACP] + H2O = (9Z)-octadecenoate + holo-[ACP] + H(+). Plays an essential role in chain termination during de novo fatty acid synthesis. High thioesterase activity for oleoyl-ACP versus other acyl-ACPs. The chain is Oleoyl-acyl carrier protein thioesterase, chloroplastic (FATA) from Coriandrum sativum (Coriander).